Reading from the N-terminus, the 837-residue chain is Striatin-interacting protein 1 (837 aa).

The residue at position 1 (methionine 1) is an N-acetylmethionine. Disordered stretches follow at residues 1-67 and 333-423; these read MEPA…ESPD and AASP…KGLP. The segment covering 18–35 has biased composition (pro residues); that stretch reads PQPPPPPPPATAQPPPGA. Residues 47–60 show a composition bias toward basic and acidic residues; that stretch reads KAREFNRNQRKDSE. Serine 59, serine 335, and serine 339 each carry phosphoserine. Residues 356–377 are compositionally biased toward basic and acidic residues; that stretch reads KALIKQDNLDAFNERDPYKADD. Over residues 378-391 the composition is skewed to acidic residues; it reads SREEEEENDDDSSL. Serine 788 is modified (phosphoserine). The interval 796-837 is required for STRIPAK core complex formation; that stretch reads DNCLQSVLGQRVDLPEDFQMNYDLWLEREVFSKPISWEELLQ.

Belongs to the STRIP family. Part of the core of STRIPAK complexes composed of PP2A catalytic and scaffolding subunits, the striatins (PP2A regulatory subunits), the striatin-associated proteins MOB4, STRIP1 and STRIP2, PDCD10 and members of the STE20 kinases, such as STK24 and STK26. The STRIPAK complex can be extended by adapter proteins such as SLMAP:SIKE1, CTTNBP2 or CTTNBP2NL. Interacts with CDC42BPB. Interacts with CTTNBP2NL.

Its subcellular location is the cytoplasm. Functionally, plays a role in the regulation of cell morphology and cytoskeletal organization. Required in the cortical actin filament dynamics and cell shape. Part of the striatin-interacting phosphatase and kinase (STRIPAK) complexes. STRIPAK complexes have critical roles in protein (de)phosphorylation and are regulators of multiple signaling pathways including Hippo, MAPK, nuclear receptor and cytoskeleton remodeling. Different types of STRIPAK complexes are involved in a variety of biological processes such as cell growth, differentiation, apoptosis, metabolism and immune regulation. The chain is Striatin-interacting protein 1 (Strip1) from Mus musculus (Mouse).